The chain runs to 409 residues: Nucleoprotein (409 aa).

Disordered regions lie at residues 1-32, 47-84, 121-145, and 164-194; these read MASG…SSGN, PQPK…KSGR, ADTK…LRFS, and RSGR…GAED. Positions 29 to 160 are RNA-binding; that stretch reads SSGNASWFQA…GNFRWDFIPL (132 aa). Positions 31-156 constitute a CoV N NTD domain; that stretch reads GNASWFQAIK…GGPDGNFRWD (126 aa). Residues 57 to 68 show a composition bias toward polar residues; the sequence is PDNNNIKPSQQH. Positions 70–84 are enriched in basic residues; it reads YWRRQARYKPGKSGR. Over residues 164–179 the composition is skewed to low complexity; it reads RSGRSTAASSAASSRA. Residues 180 to 192 show a composition bias toward basic and acidic residues; the sequence is PSREGSRGRRSGA. S190 carries the post-translational modification Phosphoserine; by host. In terms of domain architecture, CoV N CTD spans 215 to 331; it reads TKAKADEMAH…QCVDGVGTRP (117 aa). Residues 226–333 are dimerization; that stretch reads RYCKRTIPPG…VDGVGTRPKD (108 aa). An intrachain disulfide couples C320 to C323. A disordered region spans residues 326–409; sequence GVGTRPKDDE…GDSALGENEL (84 aa). A compositionally biased stretch (basic residues) spans 358–367; sequence QRPKKEKKPK. Positions 368–384 are enriched in basic and acidic residues; that stretch reads KQDDEVDKALTSDEERN. T378 bears the Phosphothreonine; by host mark. Residue S379 is modified to Phosphoserine; by host.

Belongs to the gammacoronavirus nucleocapsid protein family. As to quaternary structure, homooligomer. Both monomeric and oligomeric forms interact with RNA. Interacts with protein M. Interacts with NSP3; this interaction serves to tether the genome to the newly translated replicase-transcriptase complex at a very early stage of infection. In terms of processing, ADP-ribosylated. The ADP-ribosylation is retained in the virion during infection. Post-translationally, phosphorylated on serine and threonine residues.

It localises to the virion. The protein localises to the host endoplasmic reticulum-Golgi intermediate compartment. It is found in the host Golgi apparatus. Packages the positive strand viral genome RNA into a helical ribonucleocapsid (RNP) and plays a fundamental role during virion assembly through its interactions with the viral genome and membrane protein M. Plays an important role in enhancing the efficiency of subgenomic viral RNA transcription as well as viral replication. The sequence is that of Nucleoprotein from Gallus gallus (Chicken).